The primary structure comprises 366 residues: Aminomethyltransferase (366 aa).

Belongs to the GcvT family. In terms of assembly, the glycine cleavage system is composed of four proteins: P, T, L and H.

The enzyme catalyses N(6)-[(R)-S(8)-aminomethyldihydrolipoyl]-L-lysyl-[protein] + (6S)-5,6,7,8-tetrahydrofolate = N(6)-[(R)-dihydrolipoyl]-L-lysyl-[protein] + (6R)-5,10-methylene-5,6,7,8-tetrahydrofolate + NH4(+). The glycine cleavage system catalyzes the degradation of glycine. This chain is Aminomethyltransferase, found in Bacillus cereus (strain ZK / E33L).